Consider the following 232-residue polypeptide: Large ribosomal subunit protein uL1 (232 aa).

This sequence belongs to the universal ribosomal protein uL1 family. In terms of assembly, part of the 50S ribosomal subunit.

In terms of biological role, binds directly to 23S rRNA. The L1 stalk is quite mobile in the ribosome, and is involved in E site tRNA release. Protein L1 is also a translational repressor protein, it controls the translation of the L11 operon by binding to its mRNA. In Chlamydia trachomatis serovar L2b (strain UCH-1/proctitis), this protein is Large ribosomal subunit protein uL1.